The following is an 853-amino-acid chain: Protein translocase subunit SecA 1 (853 aa).

ATP contacts are provided by residues Gln-85, 103–107, and Asp-492; that span reads GEGKT.

It belongs to the SecA family. In terms of assembly, monomer and homodimer. Part of the essential Sec protein translocation apparatus which comprises SecA, SecYEG and auxiliary proteins SecDF. Other proteins may also be involved.

It localises to the cell membrane. It is found in the cytoplasm. The catalysed reaction is ATP + H2O + cellular proteinSide 1 = ADP + phosphate + cellular proteinSide 2.. Its function is as follows. Part of the Sec protein translocase complex. Interacts with the SecYEG preprotein conducting channel. Has a central role in coupling the hydrolysis of ATP to the transfer of proteins into and across the cell membrane, serving as an ATP-driven molecular motor driving the stepwise translocation of polypeptide chains across the membrane. The sequence is that of Protein translocase subunit SecA 1 from Corynebacterium diphtheriae (strain ATCC 700971 / NCTC 13129 / Biotype gravis).